We begin with the raw amino-acid sequence, 283 residues long: 2-dehydro-3-deoxyphosphooctonate aldolase (283 aa).

It belongs to the KdsA family.

The protein localises to the cytoplasm. The catalysed reaction is D-arabinose 5-phosphate + phosphoenolpyruvate + H2O = 3-deoxy-alpha-D-manno-2-octulosonate-8-phosphate + phosphate. It functions in the pathway carbohydrate biosynthesis; 3-deoxy-D-manno-octulosonate biosynthesis; 3-deoxy-D-manno-octulosonate from D-ribulose 5-phosphate: step 2/3. The protein operates within bacterial outer membrane biogenesis; lipopolysaccharide biosynthesis. This is 2-dehydro-3-deoxyphosphooctonate aldolase from Synechococcus sp. (strain WH7803).